The following is an 885-amino-acid chain: Dipeptidyl peptidase 9 (885 aa).

Residues serine 752, aspartate 830, and histidine 862 each act as charge relay system in the active site. Serine 752 contacts Val-boroPro.

It belongs to the peptidase S9B family. DPPIV subfamily. As to quaternary structure, homodimer. Forms a ternary complex with NLRP1, composed of a DPP9 homodimer, one full-length NLRP1 protein, and one cleaved C-terminus of NLRP1 (NACHT, LRR and PYD domains-containing protein 1, C-terminus).

Its subcellular location is the nucleus. It carries out the reaction Release of an N-terminal dipeptide, Xaa-Yaa-|-Zaa-, from a polypeptide, preferentially when Yaa is Pro, provided Zaa is neither Pro nor hydroxyproline.. In terms of biological role, dipeptidyl peptidase that cleaves off N-terminal dipeptides from proteins having a Pro or Ala residue at position 2. Acts as a key inhibitor of the NLRP1 inflammasome. The chain is Dipeptidyl peptidase 9 from Danio rerio (Zebrafish).